Consider the following 475-residue polypeptide: tRNA-2-methylthio-N(6)-dimethylallyladenosine synthase (475 aa).

The 118-residue stretch at 2 to 119 (AKLHITTWGC…LPEMINKIRG (118 aa)) folds into the MTTase N-terminal domain. Residues cysteine 11, cysteine 48, cysteine 82, cysteine 156, cysteine 160, and cysteine 163 each coordinate [4Fe-4S] cluster. The Radical SAM core domain occupies 142-374 (RAEGPTAFVS…QQRINHQAMQ (233 aa)). A TRAM domain is found at 377 to 440 (RAMLGTEQRV…TNSLRGEVVR (64 aa)).

It belongs to the methylthiotransferase family. MiaB subfamily. As to quaternary structure, monomer. [4Fe-4S] cluster is required as a cofactor.

Its subcellular location is the cytoplasm. It catalyses the reaction N(6)-dimethylallyladenosine(37) in tRNA + (sulfur carrier)-SH + AH2 + 2 S-adenosyl-L-methionine = 2-methylsulfanyl-N(6)-dimethylallyladenosine(37) in tRNA + (sulfur carrier)-H + 5'-deoxyadenosine + L-methionine + A + S-adenosyl-L-homocysteine + 2 H(+). Functionally, catalyzes the methylthiolation of N6-(dimethylallyl)adenosine (i(6)A), leading to the formation of 2-methylthio-N6-(dimethylallyl)adenosine (ms(2)i(6)A) at position 37 in tRNAs that read codons beginning with uridine. The sequence is that of tRNA-2-methylthio-N(6)-dimethylallyladenosine synthase from Actinobacillus pleuropneumoniae serotype 3 (strain JL03).